The primary structure comprises 154 residues: Vimentin (154 aa).

The segment covering 1–13 has biased composition (low complexity); sequence MSTRSVSSSSYRR. The tract at residues 1 to 31 is disordered; the sequence is MSTRSVSSSSYRRMFGGPGTASRPSSTRSYV. N-acetylserine is present on S2. Residues 2–95 are head; it reads STRSVSSSSY…FSLADAINTE (94 aa). S5 bears the Phosphoserine mark. The residue at position 7 (S7) is a Phosphoserine; by PKA and PKC; alternate. S7 carries O-linked (GlcNAc) serine; alternate glycosylation. A Phosphoserine modification is found at S8. S9 and S10 each carry phosphoserine; by PKC. T20 is modified (phosphothreonine). Position 25 is a phosphoserine; by PKA and PKC (S25). A Phosphoserine; by PKC modification is found at S26. O-linked (GlcNAc) threonine glycosylation occurs at T33. S34 carries O-linked (GlcNAc) serine; alternate glycosylation. S34 bears the Phosphoserine; by PKC; alternate mark. The residue at position 39 (S39) is a Phosphoserine; by CaMK2, PKA, PKC and ROCK2. A Phosphoserine; by PKC modification is found at S42. At S49 the chain carries Phosphoserine. Y53 carries the post-translational modification Phosphotyrosine. Position 55 is a phosphoserine (S55). S56 carries the post-translational modification Phosphoserine; by CDK5 and CDK1. Position 61 is a phosphotyrosine (Y61). S66 carries the post-translational modification Phosphoserine; by PKA and PKC. S72 is subject to Phosphoserine; by AURKB and ROCK2. A Phosphoserine; by CaMK2 modification is found at S83. Phosphoserine is present on S87. The segment at 96–131 is coil 1A; that stretch reads FKNTRTNEKVELQELNDRFANYIDKVRFLEQQNKIL. Residues 96–131 are a coiled coil; it reads FKNTRTNEKVELQELNDRFANYIDKVRFLEQQNKIL. Positions 103-154 constitute an IF rod domain; it reads EKVELQELNDRFANYIDKVRFLEQQNKILLAELEQLKGQGKSRLGHLYEEEM. K104 participates in a covalent cross-link: Glycyl lysine isopeptide (Lys-Gly) (interchain with G-Cter in SUMO2). Phosphotyrosine is present on Y117. Residues K120, K129, and K139 each carry the N6-acetyllysine; alternate modification. N6-succinyllysine; alternate is present on residues K120 and K129. Residues K120, K129, and K139 each participate in a glycyl lysine isopeptide (Lys-Gly) (interchain with G-Cter in SUMO2); alternate cross-link. The linker 1 stretch occupies residues 132–153; sequence LAELEQLKGQGKSRLGHLYEEE. S144 carries the phosphoserine modification. Residue M154 is a region of interest, coil 1B.

It belongs to the intermediate filament family. As to quaternary structure, homomer assembled from elementary dimers. Identified in complexes that contain VIM, EZR, AHNAK, BFSP1, BFSP2, ANK2, PLEC, PRX and spectrin. Interacts with BCAS3. Interacts with LGSN. Interacts with SYNM. Interacts (via rod region) with PLEC (via CH 1 domain). Interacts with STK33. Interacts with LARP6. Interacts with RAB8B. Interacts with TOR1A; the interaction associates TOR1A with the cytoskeleton. Interacts with TOR1AIP1. Interacts with TOR1AIP1. Interacts with DIAPH1. Interacts with EPPK1; interaction is dependent of higher-order structure of intermediate filament. Interacts with the non-receptor tyrosine kinase SRMS; the interaction leads to phosphorylation of VIM. Interacts with NOD2. Interacts (via head region) with CORO1C. Interacts with HDGF. Interacts with PRKCE (via phorbol-ester/DAG-type 2 domain). Interacts with BFSP2. Interacts with PPL. Interacts with PKP1 and PKP2. Interacts with SCRIB (via PDZ domains); the interaction protects SCRIB from proteasomal degradation and facilitates SCRIB localization to intermediate filaments, the interaction is reduced by cell contact inhibition. Post-translationally, one of the most prominent phosphoproteins in various cells of mesenchymal origin. Phosphorylation is enhanced during cell division, at which time vimentin filaments are significantly reorganized. Phosphorylation by PKN1 inhibits the formation of filaments. Filament disassembly during mitosis is promoted by phosphorylation at Ser-55 as well as by nestin. Phosphorylated at Ser-56 by CDK5 during neutrophil secretion in the cytoplasm. Phosphorylated by STK33. Phosphorylated on tyrosine residues by SRMS.

The protein resides in the cytoplasm. Its subcellular location is the cytoskeleton. It localises to the nucleus matrix. It is found in the cell membrane. Vimentins are class-III intermediate filaments found in various non-epithelial cells, especially mesenchymal cells. Vimentin is attached to the nucleus, endoplasmic reticulum, and mitochondria, either laterally or terminally. Plays a role in cell directional movement, orientation, cell sheet organization and Golgi complex polarization at the cell migration front. Protects SCRIB from proteasomal degradation and facilitates its localization to intermediate filaments in a cell contact-mediated manner. Its function is as follows. Involved with LARP6 in the stabilization of type I collagen mRNAs for CO1A1 and CO1A2. The sequence is that of Vimentin (VIM) from Ovis aries (Sheep).